The sequence spans 530 residues: Arginine--tRNA ligase (530 aa).

Positions 113–123 (ANPTGPLHIGH) match the 'HIGH' region motif.

This sequence belongs to the class-I aminoacyl-tRNA synthetase family. As to quaternary structure, monomer.

The protein resides in the cytoplasm. It carries out the reaction tRNA(Arg) + L-arginine + ATP = L-arginyl-tRNA(Arg) + AMP + diphosphate. The polypeptide is Arginine--tRNA ligase (Campylobacter jejuni subsp. jejuni serotype O:2 (strain ATCC 700819 / NCTC 11168)).